The primary structure comprises 263 residues: Endonuclease 8 (263 aa).

Proline 2 (schiff-base intermediate with DNA) is an active-site residue. Glutamate 3 serves as the catalytic Proton donor. Catalysis depends on lysine 53, which acts as the Proton donor; for beta-elimination activity. Glutamine 70, arginine 125, and asparagine 169 together coordinate DNA. An FPG-type zinc finger spans residues 229–263 (KVFHRDGEACERCGGIIEKTTLSSRPFYWCPHCQK). The Proton donor; for delta-elimination activity role is filled by arginine 253.

It belongs to the FPG family. Zn(2+) is required as a cofactor.

It carries out the reaction 2'-deoxyribonucleotide-(2'-deoxyribose 5'-phosphate)-2'-deoxyribonucleotide-DNA = a 3'-end 2'-deoxyribonucleotide-(2,3-dehydro-2,3-deoxyribose 5'-phosphate)-DNA + a 5'-end 5'-phospho-2'-deoxyribonucleoside-DNA + H(+). Involved in base excision repair of DNA damaged by oxidation or by mutagenic agents. Acts as a DNA glycosylase that recognizes and removes damaged bases. Has a preference for oxidized pyrimidines, such as thymine glycol, 5,6-dihydrouracil and 5,6-dihydrothymine. Has AP (apurinic/apyrimidinic) lyase activity and introduces nicks in the DNA strand. Cleaves the DNA backbone by beta-delta elimination to generate a single-strand break at the site of the removed base with both 3'- and 5'-phosphates. This is Endonuclease 8 from Salmonella dublin (strain CT_02021853).